Reading from the N-terminus, the 391-residue chain is Histidinol-phosphate aminotransferase (391 aa).

N6-(pyridoxal phosphate)lysine is present on Lys246.

Belongs to the class-II pyridoxal-phosphate-dependent aminotransferase family. Histidinol-phosphate aminotransferase subfamily. It depends on pyridoxal 5'-phosphate as a cofactor.

It carries out the reaction L-histidinol phosphate + 2-oxoglutarate = 3-(imidazol-4-yl)-2-oxopropyl phosphate + L-glutamate. It functions in the pathway amino-acid biosynthesis; L-histidine biosynthesis; L-histidine from 5-phospho-alpha-D-ribose 1-diphosphate: step 7/9. This is Histidinol-phosphate aminotransferase from Methanopyrus kandleri (strain AV19 / DSM 6324 / JCM 9639 / NBRC 100938).